The following is a 222-amino-acid chain: MGFFDLFGKKTAMVAPNEALPGRSATMPVPDKHFVNGNPLKAPFPQGMETALFGLGCFWGAERKFWQIPGVYSTAVGYAAGYTPNPTYQEVCTGMTGHNEVVLVAFDPQQVSYDQLLKVFWESHNPTQGMRQGNDVGTQYRSGIYTYSEAQQQAALASKQAYQQALQQAGYGEITTEILPAPDFYYAEDYHQQYLAKNPNGYCGLGGTNVACPIGTEVSLGA.

Cys57 is an active-site residue.

Belongs to the MsrA Met sulfoxide reductase family.

It catalyses the reaction L-methionyl-[protein] + [thioredoxin]-disulfide + H2O = L-methionyl-(S)-S-oxide-[protein] + [thioredoxin]-dithiol. The enzyme catalyses [thioredoxin]-disulfide + L-methionine + H2O = L-methionine (S)-S-oxide + [thioredoxin]-dithiol. Its function is as follows. Has an important function as a repair enzyme for proteins that have been inactivated by oxidation. Catalyzes the reversible oxidation-reduction of methionine sulfoxide in proteins to methionine. The chain is Peptide methionine sulfoxide reductase MsrA 1 (msrA1) from Synechocystis sp. (strain ATCC 27184 / PCC 6803 / Kazusa).